Reading from the N-terminus, the 197-residue chain is UPF0251 protein CT1277 (197 aa).

The interval 138–197 (GGGFGGGRRGGGKCRGFRSGLDRGPGHGEGRCQGEGHGNGNGNGNGQGRMRRNQQEGGEV) is disordered. Residues 157–171 (GLDRGPGHGEGRCQG) show a composition bias toward basic and acidic residues. Residues 172–184 (EGHGNGNGNGNGQ) are compositionally biased toward gly residues.

The protein belongs to the UPF0251 family.

The polypeptide is UPF0251 protein CT1277 (Chlorobaculum tepidum (strain ATCC 49652 / DSM 12025 / NBRC 103806 / TLS) (Chlorobium tepidum)).